The primary structure comprises 346 residues: Protein RecA (346 aa).

67 to 74 is an ATP binding site; the sequence is GPESSGKT.

It belongs to the RecA family.

Its subcellular location is the cytoplasm. Can catalyze the hydrolysis of ATP in the presence of single-stranded DNA, the ATP-dependent uptake of single-stranded DNA by duplex DNA, and the ATP-dependent hybridization of homologous single-stranded DNAs. It interacts with LexA causing its activation and leading to its autocatalytic cleavage. This chain is Protein RecA, found in Mycobacteroides abscessus (strain ATCC 19977 / DSM 44196 / CCUG 20993 / CIP 104536 / JCM 13569 / NCTC 13031 / TMC 1543 / L948) (Mycobacterium abscessus).